The sequence spans 366 residues: Tudor domain-containing protein 10 (366 aa).

The region spanning 34–107 (TEVYVGNLPL…RKLFVNTSKR (74 aa)) is the RRM domain. The 108-residue stretch at 210-317 (FWAMHVTEAL…PLTQPFMLEK (108 aa)) folds into the Tudor domain. A coiled-coil region spans residues 216–237 (TEALHQNMQALFSTLAQAEEQQ).

The polypeptide is Tudor domain-containing protein 10 (TDRD10) (Homo sapiens (Human)).